A 370-amino-acid chain; its full sequence is 5-hydroxytryptamine receptor 5B (370 aa).

The disordered stretch occupies residues 1–36 (MEVSNLSGATPGLAFPPGPESCSDSPSSGRSMGSTP). Topologically, residues 1–48 (MEVSNLSGATPGLAFPPGPESCSDSPSSGRSMGSTPGGLILPGREPPF) are extracellular. Asparagine 5 carries an N-linked (GlcNAc...) asparagine glycan. Over residues 20 to 36 (ESCSDSPSSGRSMGSTP) the composition is skewed to low complexity. The helical transmembrane segment at 49-75 (SAFTVLVVTLLVLLIAATFLWNLLVLV) threads the bilayer. Over 76–88 (TILRVRAFHRVPH) the chain is Cytoplasmic. The helical transmembrane segment at 89–115 (NLVASTAVSDVLVAVLVMPLSLVSELS) threads the bilayer. At 116–127 (AGRRWQLGRSLC) the chain is on the extracellular side. Cysteine 127 and cysteine 205 are joined by a disulfide. The helical transmembrane segment at 128-150 (HVWISFDVLCCTASIWNVAAIAL) threads the bilayer. A serotonin-binding site is contributed by aspartate 134. At 151 to 168 (DRYWTITRHLQYTLRTRS) the chain is on the cytoplasmic side. A helical transmembrane segment spans residues 169 to 189 (RASALMIAITWALSALIALAP). Residues 190–211 (LLFGWGEAYDARLQRCQVSQEP) lie on the Extracellular side of the membrane. The chain crosses the membrane as a helical span at residues 212–233 (SYAVFSTCGAFYLPLAVVLFVY). Over 234–300 (WKIYKAAKFR…QKEKRAAMMV (67 aa)) the chain is Cytoplasmic. Residues 301–325 (GILIGVFVLCWIPFFLTELISPLCA) form a helical membrane-spanning segment. Residues 326 to 327 (CS) are Extracellular-facing. The helical transmembrane segment at 328-352 (LPPIWKSIFLWLGYSNSFFNPLIYT) threads the bilayer. Topologically, residues 353 to 370 (AFNKNYNNAFKSLFTKQR) are cytoplasmic.

Belongs to the G-protein coupled receptor 1 family. As to expression, expressed predominantly in the central nervous system; in the hippocampus, habenula, and the doral raphe.

The protein resides in the cell membrane. G-protein coupled receptor for 5-hydroxytryptamine (serotonin), a biogenic hormone that functions as a neurotransmitter, a hormone and a mitogen. Also functions as a receptor for ergot alkaloid derivatives and other psychoactive substances. Ligand binding causes a conformation change that triggers signaling via guanine nucleotide-binding proteins (G proteins) and modulates the activity of downstream effectors. Htr5b is coupled to G(i)/G(o) G alpha proteins and mediates inhibitory neurotransmission: signaling inhibits adenylate cyclase activity and activates a phosphatidylinositol-calcium second messenger system that regulates the release of Ca(2+) ions from intracellular stores. This is 5-hydroxytryptamine receptor 5B from Mus musculus (Mouse).